The following is a 1358-amino-acid chain: Indole-3-acetaldehyde oxidase (1358 aa).

One can recognise a 2Fe-2S ferredoxin-type domain in the interval 11–98; it reads STVVLAVNGK…RCSVTTSEGI (88 aa). Residues cysteine 50, cysteine 55, and cysteine 58 each contribute to the [2Fe-2S] cluster site. Residues 241 to 419 form the FAD-binding PCMH-type domain; sequence IAASGDGWYH…LSIFIPEWGS (179 aa). Positions 532 to 559 are disordered; the sequence is SSAPSNIDTPNGSYTHETGSNVDSPERH. Positions 537–554 are enriched in polar residues; sequence NIDTPNGSYTHETGSNVD.

Belongs to the xanthine dehydrogenase family. In terms of assembly, aldehyde oxidases (AO) are homodimers and heterodimers of AO subunits. [2Fe-2S] cluster is required as a cofactor. The cofactor is FAD. Requires Mo-molybdopterin as cofactor. As to expression, mostly expressed in roots, and, to a lower extent, in mesocotyl, leaves and coleoptile. Accumulates in apical region of maize coleoptiles (at protein level).

Its subcellular location is the cytoplasm. It catalyses the reaction indole-3-acetaldehyde + O2 + H2O = (indol-3-yl)acetate + H2O2 + H(+). Its activity is regulated as follows. Inhibited by 2-mercaptoethanol, p-chloromercuribenzoate, and iodoacetate. Functionally, in higher plants aldehyde oxidases (AO) appear to be homo- and heterodimeric assemblies of AO subunits with probably different physiological functions. Involved in the biosynthesis of auxin from (indol-3-yl)acetaldehyde. Can also use indole-3-aldehyde and benzaldehyde as substrate. The chain is Indole-3-acetaldehyde oxidase (AO1) from Zea mays (Maize).